Here is a 907-residue protein sequence, read N- to C-terminus: Protein translocase subunit SecA (907 aa).

Residues glutamine 87, 105 to 109 (GEGKT), and aspartate 512 each bind ATP. The disordered stretch occupies residues 869 to 897 (AESLSAHTPVVREGEKVGRNDPCPCGSGR). Over residues 878–887 (VVREGEKVGR) the composition is skewed to basic and acidic residues. The Zn(2+) site is built by cysteine 891, cysteine 893, cysteine 902, and histidine 903.

This sequence belongs to the SecA family. In terms of assembly, monomer and homodimer. Part of the essential Sec protein translocation apparatus which comprises SecA, SecYEG and auxiliary proteins SecDF-YajC and YidC. The cofactor is Zn(2+).

Its subcellular location is the cell inner membrane. The protein localises to the cytoplasm. It catalyses the reaction ATP + H2O + cellular proteinSide 1 = ADP + phosphate + cellular proteinSide 2.. Functionally, part of the Sec protein translocase complex. Interacts with the SecYEG preprotein conducting channel. Has a central role in coupling the hydrolysis of ATP to the transfer of proteins into and across the cell membrane, serving both as a receptor for the preprotein-SecB complex and as an ATP-driven molecular motor driving the stepwise translocation of polypeptide chains across the membrane. The polypeptide is Protein translocase subunit SecA (Shewanella sediminis (strain HAW-EB3)).